Here is a 349-residue protein sequence, read N- to C-terminus: tRNA pseudouridine synthase D (349 aa).

Phe27 contributes to the substrate binding site. The active-site Nucleophile is Asp80. Residue Asn129 coordinates substrate. A TRUD domain is found at 155–303; sequence GVPNYFGAQR…VEAARRAMLL (149 aa). Phe329 contributes to the substrate binding site.

It belongs to the pseudouridine synthase TruD family.

The enzyme catalyses uridine(13) in tRNA = pseudouridine(13) in tRNA. Its function is as follows. Responsible for synthesis of pseudouridine from uracil-13 in transfer RNAs. This Escherichia fergusonii (strain ATCC 35469 / DSM 13698 / CCUG 18766 / IAM 14443 / JCM 21226 / LMG 7866 / NBRC 102419 / NCTC 12128 / CDC 0568-73) protein is tRNA pseudouridine synthase D.